Reading from the N-terminus, the 366-residue chain is Ribosomal RNA large subunit methyltransferase M (366 aa).

S-adenosyl-L-methionine contacts are provided by residues S188, C221–G224, D240, D260, and D277. K306 (proton acceptor) is an active-site residue.

Belongs to the class I-like SAM-binding methyltransferase superfamily. RNA methyltransferase RlmE family. RlmM subfamily. In terms of assembly, monomer.

It is found in the cytoplasm. The enzyme catalyses cytidine(2498) in 23S rRNA + S-adenosyl-L-methionine = 2'-O-methylcytidine(2498) in 23S rRNA + S-adenosyl-L-homocysteine + H(+). Its function is as follows. Catalyzes the 2'-O-methylation at nucleotide C2498 in 23S rRNA. This Cronobacter sakazakii (strain ATCC BAA-894) (Enterobacter sakazakii) protein is Ribosomal RNA large subunit methyltransferase M.